The following is a 207-amino-acid chain: Holliday junction branch migration complex subunit RuvA (207 aa).

A domain I region spans residues 1-71 (MIVSIAGKLV…RLTPRLIGFS (71 aa)). The segment at 72–149 (TLPERQFFDL…RFALMVAGGE (78 aa)) is domain II. The tract at residues 150 to 155 (VADAME) is flexible linker. The tract at residues 156 to 207 (VESPIVSDTYDALVTLGHSESDARKLIDETLATGKKFKDTESLLTAIYQRSK) is domain III.

Belongs to the RuvA family. Homotetramer. Forms an RuvA(8)-RuvB(12)-Holliday junction (HJ) complex. HJ DNA is sandwiched between 2 RuvA tetramers; dsDNA enters through RuvA and exits via RuvB. An RuvB hexamer assembles on each DNA strand where it exits the tetramer. Each RuvB hexamer is contacted by two RuvA subunits (via domain III) on 2 adjacent RuvB subunits; this complex drives branch migration. In the full resolvosome a probable DNA-RuvA(4)-RuvB(12)-RuvC(2) complex forms which resolves the HJ.

The protein resides in the cytoplasm. The RuvA-RuvB-RuvC complex processes Holliday junction (HJ) DNA during genetic recombination and DNA repair, while the RuvA-RuvB complex plays an important role in the rescue of blocked DNA replication forks via replication fork reversal (RFR). RuvA specifically binds to HJ cruciform DNA, conferring on it an open structure. The RuvB hexamer acts as an ATP-dependent pump, pulling dsDNA into and through the RuvAB complex. HJ branch migration allows RuvC to scan DNA until it finds its consensus sequence, where it cleaves and resolves the cruciform DNA. This is Holliday junction branch migration complex subunit RuvA from Rhodopirellula baltica (strain DSM 10527 / NCIMB 13988 / SH1).